We begin with the raw amino-acid sequence, 2292 residues long: Protein Ycf2 (2292 aa).

Residue 1644-1651 (GSIGTGRS) coordinates ATP.

This sequence belongs to the Ycf2 family.

It localises to the plastid. The protein resides in the chloroplast stroma. Functionally, probable ATPase of unknown function. Its presence in a non-photosynthetic plant (Epifagus virginiana) and experiments in tobacco indicate that it has an essential function which is probably not related to photosynthesis. This is Protein Ycf2 from Morus indica (Mulberry).